The following is an 88-amino-acid chain: Putative membrane protein insertion efficiency factor (88 aa).

The disordered stretch occupies residues 67-88; the sequence is LNAGGYDPVPPKSDNHSKENKK. Over residues 79 to 88 the composition is skewed to basic and acidic residues; that stretch reads SDNHSKENKK.

This sequence belongs to the UPF0161 family.

Its subcellular location is the cell inner membrane. Functionally, could be involved in insertion of integral membrane proteins into the membrane. This Actinobacillus succinogenes (strain ATCC 55618 / DSM 22257 / CCUG 43843 / 130Z) protein is Putative membrane protein insertion efficiency factor.